The primary structure comprises 589 residues: Cytoplasmic polyadenylation element-binding protein 2 (589 aa).

Disordered regions lie at residues 1 to 103 (MPPP…QAAA) and 118 to 140 (PLLKQSPWSNHQSSGWGTGSMSW). The segment covering 24 to 33 (FFPSFSPVSP) has biased composition (low complexity). Positions 44–53 (SGGGGGGFGG) are enriched in gly residues. The segment covering 60-81 (VPPPPPPAMNIPQQQPPPPAAP) has biased composition (pro residues). Composition is skewed to low complexity over residues 82–103 (QQPQSRRSPVSPQLQQQHQAAA) and 130–140 (SSGWGTGSMSW). S89 carries the phosphoserine modification. RRM domains are found at residues 332–423 (RKVF…PWNL) and 440–522 (KTIF…PYVL).

It belongs to the RRM CPEB family. Interacts with TENT2/GLD2.

The protein localises to the cytoplasm. May play a role in translational regulation of stored mRNAs in transcriptionally inactive haploid spermatids. Binds to poly(U) RNA oligomers. Required for cell cycle progression, specifically for the transition from metaphase to anaphase. This chain is Cytoplasmic polyadenylation element-binding protein 2 (CPEB2), found in Homo sapiens (Human).